We begin with the raw amino-acid sequence, 1275 residues long: O-antigen biosynthesis protein RfbC (1275 aa).

Involved in O-antigen biosynthesis. The polypeptide is O-antigen biosynthesis protein RfbC (rfbC) (Myxococcus xanthus).